The chain runs to 224 residues: V-type ATP synthase subunit D (224 aa).

Positions 190–224 are disordered; that stretch reads REAGYTQKKIKAKIEGKNKEAREAAAATSHGSAAD. Over residues 201-212 the composition is skewed to basic and acidic residues; it reads AKIEGKNKEARE. Residues 213–224 are compositionally biased toward low complexity; the sequence is AAAATSHGSAAD.

This sequence belongs to the V-ATPase D subunit family.

Its function is as follows. Produces ATP from ADP in the presence of a proton gradient across the membrane. This chain is V-type ATP synthase subunit D (atpD), found in Deinococcus radiodurans (strain ATCC 13939 / DSM 20539 / JCM 16871 / CCUG 27074 / LMG 4051 / NBRC 15346 / NCIMB 9279 / VKM B-1422 / R1).